The primary structure comprises 403 residues: Phosphoglycerate kinase (403 aa).

Substrate contacts are provided by residues 24 to 26 (DLN), Arg-39, 62 to 65 (HLGR), Arg-121, and Arg-161. Residues Lys-211, Gly-299, Glu-330, and 359 to 362 (GGDS) each bind ATP.

This sequence belongs to the phosphoglycerate kinase family. Monomer.

The protein localises to the cytoplasm. It carries out the reaction (2R)-3-phosphoglycerate + ATP = (2R)-3-phospho-glyceroyl phosphate + ADP. The protein operates within carbohydrate degradation; glycolysis; pyruvate from D-glyceraldehyde 3-phosphate: step 2/5. This is Phosphoglycerate kinase from Corynebacterium jeikeium (strain K411).